The primary structure comprises 862 residues: Rho guanine nucleotide exchange factor 7 (862 aa).

In terms of domain architecture, Calponin-homology (CH) spans 1-112; the sequence is MNSAEQTVTW…SLVTLNKVTA (112 aa). Phosphoserine is present on residues serine 132, serine 155, serine 164, serine 228, and serine 236. The 60-residue stretch at 163 to 222 folds into the SH3 domain; that stretch reads NSQLVVRAKFNFQQTNEDELSFSKGDVIHVTRVEEGGWWEGTHNGRTGWFPSNYVREIKP. Residues 250-430 enclose the DH domain; sequence YYNVVLQNIL…KNLSAQCQEV (181 aa). The PH domain occupies 452 to 557; that stretch reads DIKTLGSVTY…WVEHLQKQTK (106 aa). Serine 497 is subject to Phosphoserine. Disordered regions lie at residues 559–591, 657–679, and 728–748; these read TSVS…ADSK, KTMK…EFAV, and DQSS…EPSD. Residues 572–585 show a composition bias toward polar residues; that stretch reads PSHTLPSHPLTPSS. Residues 657–669 show a composition bias toward basic residues; it reads KTMKKLLPKRKPE. Residues 670-679 are compositionally biased toward basic and acidic residues; the sequence is RKPSDEEFAV. A Phosphoserine modification is found at serine 673. The segment covering 731–744 has biased composition (low complexity); that stretch reads SLDSLGRRSSLSRL. Position 776 is a phosphoserine (serine 776). Residues 804–854 are a coiled coil; that stretch reads KSLVDTVYALKDEVQELRQDNKKMKKSLEEEQRARKDLEKLVRKVLKNMND.

Interacts with PAK kinases through the SH3 domain. Interacts with unphosphorylated PAK1. Interacts with ITCH. Interacts with SCRIB; interaction is direct and may play a role in regulation of apoptosis. Interacts with GIT1 and TGFB1I1. Interacts with FRMPD4 (via N-terminus). Interacts with CaMK1. Interacts with BIN2. Interacts with PTK2/FAK1 and RAC1. Interacts with PARVB. Interacts with YWHAZ. Interacts (via PH domain) with NOX1 (via FAD-binding FR-type domain). In terms of processing, phosphorylated on Ser-673 by CaMK1; enhancement of GEF activity and downstream activation of RAC1. Phosphorylated by PTK2/FAK1; this promotes interaction with RAC1. As to expression, seems to be expressed in the central nervous system. Isoform B, isoform C and isoform E are expressed with highest levels in brain and testis.

Its subcellular location is the cell junction. It is found in the focal adhesion. The protein resides in the cell projection. It localises to the ruffle. The protein localises to the cytoplasm. Its subcellular location is the cell cortex. It is found in the lamellipodium. Its function is as follows. Acts as a RAC1 guanine nucleotide exchange factor (GEF) and can induce membrane ruffling. May function as a positive regulator of apoptosis. Functions in cell migration, attachment and cell spreading. Promotes targeting of RAC1 to focal adhesions. Downstream of NMDA receptors and CaMKK-CaMK1 signaling cascade, promotes the formation of spines and synapses in hippocampal neurons. This chain is Rho guanine nucleotide exchange factor 7 (Arhgef7), found in Mus musculus (Mouse).